Here is a 904-residue protein sequence, read N- to C-terminus: Leucine--tRNA ligase (904 aa).

Positions 49-59 (PYPSGDLHIGH) match the 'HIGH' region motif. A 'KMSKS' region motif is present at residues 663-667 (TMSKS). Lysine 666 is a binding site for ATP.

Belongs to the class-I aminoacyl-tRNA synthetase family.

The protein resides in the cytoplasm. It catalyses the reaction tRNA(Leu) + L-leucine + ATP = L-leucyl-tRNA(Leu) + AMP + diphosphate. The protein is Leucine--tRNA ligase of Roseiflexus castenholzii (strain DSM 13941 / HLO8).